Consider the following 301-residue polypeptide: Mitochondrial carnitine/acylcarnitine carrier protein (301 aa).

Position 2 is an N-acetylalanine (A2). At 2-12 (ADEPKPISPFK) the chain is on the cytoplasmic side. 3 Solcar repeats span residues 8–99 (ISPF…GKKL), 108–196 (LSYP…LKNL), and 207–293 (LSVP…AMKF). The chain crosses the membrane as a helical span at residues 13-31 (NLLAGGFGGMCLVFVGHPL). Residues 32–73 (DTVKVRLQTQPPSLSGQPPMYSGTLDCFRKTLMREGITGLYR) lie on the Mitochondrial matrix side of the membrane. The chain crosses the membrane as a helical span at residues 74–93 (GMAAPIIGVTPMFAVCFFGF). The Cytoplasmic segment spans residues 94-112 (GLGKKLQQKSPEDELSYPQ). Residues 113–131 (LFTAGMLSGVFTTGIMTPG) form a helical membrane-spanning segment. Residues 132–170 (ERIKCLLQIQASSGENKYSGTLDCAKKLYQEFGIRGFYK) lie on the Mitochondrial matrix side of the membrane. K148 and K157 each carry N6-acetyllysine. K170 carries the N6-acetyllysine; alternate modification. The residue at position 170 (K170) is an N6-succinyllysine; alternate. The helical transmembrane segment at 171 to 190 (GTVLTLMRDVPASGMYFMTY) threads the bilayer. The Cytoplasmic portion of the chain corresponds to 191 to 211 (EWLKNLFTPEGKSVSDLSVPR). The chain crosses the membrane as a helical span at residues 212-230 (ILVAGGFAGIFNWAVAIPP). Over 231–267 (DVLKSRFQTAPPGKYPNGFRDVLRELIREEGVTSLYK) the chain is Mitochondrial matrix. Residues 268–287 (GFNAVMIRAFPANAACFLGF) form a helical membrane-spanning segment. Residues 288 to 301 (EIAMKFLNWIAPNL) lie on the Cytoplasmic side of the membrane.

Belongs to the mitochondrial carrier (TC 2.A.29) family. In terms of tissue distribution, widely expressed, with highest levels in the liver, intermediate levels in heart, testis and kidney and low levels in brain, including cortex, cerebellum, hippocampus and hypothalamus.

The protein resides in the mitochondrion inner membrane. It carries out the reaction O-acetyl-(R)-carnitine(in) + (R)-carnitine(out) = O-acetyl-(R)-carnitine(out) + (R)-carnitine(in). It catalyses the reaction an O-acyl-(R)-carnitine(in) + (R)-carnitine(out) = an O-acyl-(R)-carnitine(out) + (R)-carnitine(in). The catalysed reaction is O-propanoyl-(R)-carnitine(in) + (R)-carnitine(out) = O-propanoyl-(R)-carnitine(out) + (R)-carnitine(in). The enzyme catalyses O-hexadecanoyl-(R)-carnitine(in) + (R)-carnitine(out) = O-hexadecanoyl-(R)-carnitine(out) + (R)-carnitine(in). It carries out the reaction O-octanoyl-(R)-carnitine(in) + (R)-carnitine(out) = O-octanoyl-(R)-carnitine(out) + (R)-carnitine(in). It catalyses the reaction (R)-carnitine(in) = (R)-carnitine(out). Functionally, mediates the electroneutral exchange of acylcarnitines (O-acyl-(R)-carnitine or L-acylcarnitine) of different acyl chain lengths (ranging from O-acetyl-(R)-carnitine to long-chain O-acyl-(R)-carnitines) with free carnitine ((R)-carnitine or L-carnitine) across the mitochondrial inner membrane, via a ping-pong mechanism. Key player in the mitochondrial oxidation pathway, it translocates the fatty acids in the form of acylcarnitines into the mitochondrial matrix, where the carnitine palmitoyltransferase 2 (CPT-2) activates them to undergo fatty acid beta-oxidation. Catalyzes the unidirectional transport (uniport) of carnitine at lower rates than the antiport (exchange). The sequence is that of Mitochondrial carnitine/acylcarnitine carrier protein from Mus musculus (Mouse).